The chain runs to 397 residues: Elongation factor Tu-2 (397 aa).

Positions 10 to 206 constitute a tr-type G domain; it reads KPHVNIGTIG…AVDEFVPEPV (197 aa). Residues 19-26 form a G1 region; that stretch reads GHIDHGKT. 19–26 lines the GTP pocket; that stretch reads GHIDHGKT. Residue Thr26 participates in Mg(2+) binding. Residues 62-66 are G2; sequence GITIS. Residues 83 to 86 form a G3 region; sequence DCPG. Residues 83–87 and 138–141 contribute to the GTP site; these read DCPGH and NKTD. Positions 138-141 are G4; sequence NKTD. The tract at residues 176–178 is G5; it reads SAL.

It belongs to the TRAFAC class translation factor GTPase superfamily. Classic translation factor GTPase family. EF-Tu/EF-1A subfamily. In terms of assembly, monomer.

Its subcellular location is the cytoplasm. It carries out the reaction GTP + H2O = GDP + phosphate + H(+). Its function is as follows. GTP hydrolase that promotes the GTP-dependent binding of aminoacyl-tRNA to the A-site of ribosomes during protein biosynthesis. The chain is Elongation factor Tu-2 from Streptomyces ramocissimus.